A 914-amino-acid polypeptide reads, in one-letter code: Isoleucine--tRNA ligase (914 aa).

Residues 64 to 74 carry the 'HIGH' region motif; it reads PYANGNFHLGH. Glutamate 557 is an L-isoleucyl-5'-AMP binding site. The 'KMSKS' region signature appears at 598–602; it reads PMSKS. Lysine 601 is an ATP binding site. Zn(2+) is bound by residues cysteine 889, cysteine 892, cysteine 906, and cysteine 909.

The protein belongs to the class-I aminoacyl-tRNA synthetase family. IleS type 1 subfamily. In terms of assembly, monomer. Zn(2+) serves as cofactor.

It is found in the cytoplasm. The catalysed reaction is tRNA(Ile) + L-isoleucine + ATP = L-isoleucyl-tRNA(Ile) + AMP + diphosphate. Its function is as follows. Catalyzes the attachment of isoleucine to tRNA(Ile). As IleRS can inadvertently accommodate and process structurally similar amino acids such as valine, to avoid such errors it has two additional distinct tRNA(Ile)-dependent editing activities. One activity is designated as 'pretransfer' editing and involves the hydrolysis of activated Val-AMP. The other activity is designated 'posttransfer' editing and involves deacylation of mischarged Val-tRNA(Ile). The chain is Isoleucine--tRNA ligase from Leptospira interrogans serogroup Icterohaemorrhagiae serovar Lai (strain 56601).